A 232-amino-acid polypeptide reads, in one-letter code: Ribose-5-phosphate isomerase A (232 aa).

Substrate contacts are provided by residues 28–31, 83–86, and 96–99; these read TGST, DGAD, and KGGG. Glu105 serves as the catalytic Proton acceptor. Lys123 provides a ligand contact to substrate.

This sequence belongs to the ribose 5-phosphate isomerase family. In terms of assembly, homodimer.

The enzyme catalyses aldehydo-D-ribose 5-phosphate = D-ribulose 5-phosphate. It functions in the pathway carbohydrate degradation; pentose phosphate pathway; D-ribose 5-phosphate from D-ribulose 5-phosphate (non-oxidative stage): step 1/1. In terms of biological role, catalyzes the reversible conversion of ribose-5-phosphate to ribulose 5-phosphate. The polypeptide is Ribose-5-phosphate isomerase A (Nitrobacter hamburgensis (strain DSM 10229 / NCIMB 13809 / X14)).